We begin with the raw amino-acid sequence, 530 residues long: Retinoic acid-induced protein 2 (530 aa).

Residues 1-13 are compositionally biased toward polar residues; that stretch reads MDDLQSQNLSMDM. The tract at residues 1-22 is disordered; the sequence is MDDLQSQNLSMDMTDSPPALAN.

In Homo sapiens (Human), this protein is Retinoic acid-induced protein 2 (RAI2).